We begin with the raw amino-acid sequence, 350 residues long: MATTAQQSPQPVAGKRKGKSQFLPAKRARRGDAGGPRQLEPGLQGILITCNMNERKCVEEAYSLLNEYGDDMYGPEKFIDKDQQPSGSEGEDDDAEAALKKEVGDIKASTEKRLRRFQSVESGANNVVFIRTLGIEPEKLVHHILQDMYKTKKKKTRVILRMLPISGTCKAFLEDMKKYAETFLEPWFKAPNKGTFQIVYKSRNNSHMNREEVIKELAGIVGSLNSENKVDLTNPEYTVVVEIIKAVCCLSVVKDYVLFRKYNLQEVVKSAKDSQPHPKLGNGKEAKLEPDSKLSQSDPPEGNQVAPESIEELGQTEPGSETQAGSEGDAKPEPESQVSEVPKTNENELS.

Residues 1 to 10 show a composition bias toward polar residues; sequence MATTAQQSPQ. Disordered regions lie at residues 1–42 and 75–96; these read MATT…LEPG and PEKFIDKDQQPSGSEGEDDDAE. Alanine 2 bears the N-acetylalanine mark. 4 positions are modified to phosphoserine: serine 8, serine 86, serine 88, and serine 119. The region spanning 147 to 254 is the THUMP domain; it reads DMYKTKKKKT…KAVCCLSVVK (108 aa). The residue at position 270 (serine 270) is a Phosphoserine. A compositionally biased stretch (basic and acidic residues) spans 270 to 292; the sequence is SAKDSQPHPKLGNGKEAKLEPDS. Residues 270 to 350 are disordered; sequence SAKDSQPHPK…VPKTNENELS (81 aa).

This sequence belongs to the THUMPD1 family. In terms of assembly, interacts with NAT10. Binds tRNA.

Its function is as follows. Functions as a tRNA-binding adapter to mediate NAT10-dependent tRNA acetylation modifying cytidine to N4-acetylcytidine (ac4C). In Mus musculus (Mouse), this protein is THUMP domain-containing protein 1 (Thumpd1).